Reading from the N-terminus, the 573-residue chain is Formate--tetrahydrofolate ligase 3 (573 aa).

66–73 is an ATP binding site; that stretch reads TPLGEGKT.

It belongs to the formate--tetrahydrofolate ligase family.

The catalysed reaction is (6S)-5,6,7,8-tetrahydrofolate + formate + ATP = (6R)-10-formyltetrahydrofolate + ADP + phosphate. It functions in the pathway one-carbon metabolism; tetrahydrofolate interconversion. In Rubrobacter xylanophilus (strain DSM 9941 / JCM 11954 / NBRC 16129 / PRD-1), this protein is Formate--tetrahydrofolate ligase 3.